Consider the following 350-residue polypeptide: Transmembrane protein 185A (350 aa).

The next 7 membrane-spanning stretches (helical) occupy residues 16-36 (LIYACLLLFSVLLALRLDGII), 41-61 (WAVFAPIWLWKLMVIVGASVG), 81-101 (FKAMLIAVGIHLLLLMFEVLV), 111-131 (FWLLVFMPLFFVSPVSVAACV), 177-197 (ILMSFLCLVVLYYIVWSVLFL), 211-231 (ITMALSWMTIVVPLLTFEILL), and 240-260 (AFSCIPIFVPLWLSLITLMAT). A mediates interaction with MAP1B region spans residues 298–350 (DLHHEDSEETEETPVPEPPKIAPMFRKKARVVITQSPGKYVLPPPKLNIEMPD).

This sequence belongs to the TMEM185 family. In terms of assembly, interacts with MAP1B. Broadly expressed in brain where it is specifically expressed by neurons (at protein level). Also detected in some cells of arterioles, intestine, lung and testis (at protein level).

The protein localises to the cell projection. Its subcellular location is the dendrite. The protein resides in the membrane. This chain is Transmembrane protein 185A (Tmem185a), found in Mus musculus (Mouse).